A 63-amino-acid polypeptide reads, in one-letter code: Bowman-Birk type proteinase inhibitor (63 aa).

Cystine bridges form between cysteine 7-cysteine 60, cysteine 8-cysteine 23, cysteine 11-cysteine 56, cysteine 13-cysteine 21, cysteine 30-cysteine 37, cysteine 34-cysteine 49, and cysteine 39-cysteine 47.

Monomer.

In terms of biological role, inhibits trypsin stoichiometrically at the molar ratio of 1:2, with a dissociation constant of 4.2 nM. Does not inhibit chymotrypsin. This Lupinus albus (White lupine) protein is Bowman-Birk type proteinase inhibitor.